The chain runs to 443 residues: Ribosomal protein uS12 methylthiotransferase RimO (443 aa).

The region spanning 1-116 is the MTTase N-terminal domain; sequence MKFHLISLGC…IAEYVGKLIA (116 aa). The [4Fe-4S] cluster site is built by C10, C45, C79, C154, C158, and C161. One can recognise a Radical SAM core domain in the interval 140–370; it reads STPFFRAWVK…LELQQELSTE (231 aa). The TRAM domain occupies 373–441; sequence KKYVGTVQKV…QYDLVGGVVS (69 aa).

It belongs to the methylthiotransferase family. RimO subfamily. It depends on [4Fe-4S] cluster as a cofactor.

The protein resides in the cytoplasm. The catalysed reaction is L-aspartate(89)-[ribosomal protein uS12]-hydrogen + (sulfur carrier)-SH + AH2 + 2 S-adenosyl-L-methionine = 3-methylsulfanyl-L-aspartate(89)-[ribosomal protein uS12]-hydrogen + (sulfur carrier)-H + 5'-deoxyadenosine + L-methionine + A + S-adenosyl-L-homocysteine + 2 H(+). In terms of biological role, catalyzes the methylthiolation of an aspartic acid residue of ribosomal protein uS12. In Desulfotalea psychrophila (strain LSv54 / DSM 12343), this protein is Ribosomal protein uS12 methylthiotransferase RimO.